A 335-amino-acid polypeptide reads, in one-letter code: Transaldolase (335 aa).

The active-site Schiff-base intermediate with substrate is Lys-135.

Belongs to the transaldolase family. Type 1 subfamily. As to quaternary structure, homodimer.

The protein localises to the cytoplasm. It catalyses the reaction D-sedoheptulose 7-phosphate + D-glyceraldehyde 3-phosphate = D-erythrose 4-phosphate + beta-D-fructose 6-phosphate. Its pathway is carbohydrate degradation; pentose phosphate pathway; D-glyceraldehyde 3-phosphate and beta-D-fructose 6-phosphate from D-ribose 5-phosphate and D-xylulose 5-phosphate (non-oxidative stage): step 2/3. In terms of biological role, transaldolase is important for the balance of metabolites in the pentose-phosphate pathway. The chain is Transaldolase from Prochlorococcus marinus (strain SARG / CCMP1375 / SS120).